The primary structure comprises 217 residues: Translation initiation factor IF-3 (217 aa).

Residues 179–217 (PRKTPLVKKEEKEAAPTKAVRTIPAPPRPTAAKVAAQQA) form a disordered region.

Belongs to the IF-3 family. Monomer.

It is found in the cytoplasm. Its function is as follows. IF-3 binds to the 30S ribosomal subunit and shifts the equilibrium between 70S ribosomes and their 50S and 30S subunits in favor of the free subunits, thus enhancing the availability of 30S subunits on which protein synthesis initiation begins. In Parasynechococcus marenigrum (strain WH8102), this protein is Translation initiation factor IF-3.